The following is a 154-amino-acid chain: Ribosome maturation factor RimP (154 aa).

The protein belongs to the RimP family.

The protein resides in the cytoplasm. In terms of biological role, required for maturation of 30S ribosomal subunits. The protein is Ribosome maturation factor RimP of Deinococcus deserti (strain DSM 17065 / CIP 109153 / LMG 22923 / VCD115).